The sequence spans 94 residues: Acylphosphatase (94 aa).

Residues 8-94 enclose the Acylphosphatase-like domain; sequence RLTAWVHGRV…REQITGFHER (87 aa). Residues R23 and N41 contribute to the active site.

This sequence belongs to the acylphosphatase family.

It catalyses the reaction an acyl phosphate + H2O = a carboxylate + phosphate + H(+). The sequence is that of Acylphosphatase (acyP) from Mycobacterium sp. (strain JLS).